We begin with the raw amino-acid sequence, 574 residues long: uncharacterized protein (574 aa).

11 helical membrane passes run 14–34, 54–74, 124–144, 205–225, 253–273, 323–343, 350–370, 403–423, 441–461, 485–505, and 520–540; these read FFPT…LFFG, VVPL…LGIV, WLMA…SDTA, ICKC…TGTI, SWMA…WFIV, LVIF…VIPG, KGYV…FIWP, FPWS…AVRV, MPFF…TEFS, PLYF…LPMA, and MIDM…ITAI. N-linked (GlcNAc...) asparagine glycosylation is found at N565 and N569.

This sequence belongs to the SLC13A/DASS transporter (TC 2.A.47) family. NADC subfamily.

Its subcellular location is the membrane. This is an uncharacterized protein from Caenorhabditis elegans.